Consider the following 669-residue polypeptide: Cysteine-rich receptor-like protein kinase 10 (669 aa).

Positions 1–34 (MRRNTDQESPIMSYYSSFFFLFLFSFLTSFRVSA) are cleaved as a signal peptide. Topologically, residues 35-285 (QDPTYVYHTC…PRSGKDGNSK (251 aa)) are extracellular. Gnk2-homologous domains lie at 38–142 (TYVY…NQNI) and 148–252 (TTGG…IYAF). 4 N-linked (GlcNAc...) asparagine glycosylation sites follow: Asn-49, Asn-53, Asn-71, and Asn-80. 2 disulfides stabilise this stretch: Cys-96–Cys-105 and Cys-108–Cys-133. Asn-114, Asn-159, Asn-185, and Asn-196 each carry an N-linked (GlcNAc...) asparagine glycan. Cystine bridges form between Cys-209-Cys-218 and Cys-221-Cys-243. Residues 260–274 (PPPPPPSISTPPVSA) are compositionally biased toward pro residues. The interval 260–280 (PPPPPPSISTPPVSAPPRSGK) is disordered. A helical transmembrane segment spans residues 286–306 (VLVIAIVVPIIVAVLLFIAGY). Topologically, residues 307 to 669 (CFLTRRARKS…DASITDIHPR (363 aa)) are cytoplasmic. In terms of domain architecture, Protein kinase spans 348 to 634 (FVESNKIGQG…TLPVPRQPGL (287 aa)). Residues 354-362 (IGQGGFGEV) and Lys-376 each bind ATP. Residue Tyr-421 is modified to Phosphotyrosine. Asp-473 functions as the Proton acceptor in the catalytic mechanism. Residue Ser-477 is modified to Phosphoserine. Phosphothreonine is present on Thr-513. Tyr-521 is modified (phosphotyrosine).

Belongs to the protein kinase superfamily. Ser/Thr protein kinase family. CRK subfamily. In terms of assembly, interacts with CRKIP1 (KAPP), CRKIP2 and CRKIP3, three kinase-associated type 2C proteins.

It is found in the membrane. The catalysed reaction is L-seryl-[protein] + ATP = O-phospho-L-seryl-[protein] + ADP + H(+). It carries out the reaction L-threonyl-[protein] + ATP = O-phospho-L-threonyl-[protein] + ADP + H(+). The chain is Cysteine-rich receptor-like protein kinase 10 (CRK10) from Arabidopsis thaliana (Mouse-ear cress).